The chain runs to 344 residues: AI-2 transport protein TqsA (344 aa).

Over 1 to 4 (MAKP) the chain is Cytoplasmic. Residues 5–25 (IITLNGLKIVIMLGMLVIILC) traverse the membrane as a helical segment. Topologically, residues 26–30 (GIRFA) are periplasmic. The helical transmembrane segment at 31–51 (AEIIVPFILALFIAVILNPLV) threads the bilayer. Residues 52–61 (QHMVRWRVPR) are Cytoplasmic-facing. A helical transmembrane segment spans residues 62 to 82 (VLAVSILMTIIVMAMVLLLAY). The Periplasmic segment spans residues 83 to 149 (LGSALNELTR…LLTQLSNAMS (67 aa)). Residues 150–170 (SIFLLLLTVLFMLLEVPQLPG) form a helical membrane-spanning segment. Topologically, residues 171 to 196 (KFQQMMARPVEGMAAIQRAIDSVSHY) are cytoplasmic. The helical transmembrane segment at 197–217 (LVLKTAISIITGLVAWAMLAA) threads the bilayer. At 218-221 (LDVR) the chain is on the periplasmic side. A helical membrane pass occupies residues 222 to 242 (FAFVWGLLAFALNYIPNIGSV). The Cytoplasmic portion of the chain corresponds to 243 to 257 (LAAIPPIAQVLVFNG). The chain crosses the membrane as a helical span at residues 258–278 (FYEALLVLAGYLLINLVFGNI). Topologically, residues 279–292 (LEPRIMGRGLGLST) are periplasmic. A helical transmembrane segment spans residues 293-313 (LVVFLSLIFWGWLLGPVGMLL). Residues 314–344 (SVPLTIIVKIALEQTAGGQSIAVLLSDLNKE) are Cytoplasmic-facing.

This sequence belongs to the autoinducer-2 exporter (AI-2E) (TC 2.A.86) family.

It is found in the cell inner membrane. It carries out the reaction (2R,4S)-2-methyltetrahydrofuran-2,3,3,4-tetrol(in) = (2R,4S)-2-methyltetrahydrofuran-2,3,3,4-tetrol(out). In terms of biological role, involved in the transport of the quorum-sensing signal autoinducer 2 (AI-2). Controls the transport of AI-2 either by enhancing its secretion or inhibiting its uptake and consequently represses biofilm formation and motility and affects the global gene expression in biofilms. The polypeptide is AI-2 transport protein TqsA (Escherichia coli (strain K12)).